Consider the following 158-residue polypeptide: Putative pre-16S rRNA nuclease (158 aa).

It belongs to the YqgF nuclease family.

It is found in the cytoplasm. Its function is as follows. Could be a nuclease involved in processing of the 5'-end of pre-16S rRNA. The chain is Putative pre-16S rRNA nuclease from Paracoccus denitrificans (strain Pd 1222).